A 219-amino-acid polypeptide reads, in one-letter code: Lipid transferase CIDEB (219 aa).

One can recognise a CIDE-N domain in the interval Pro33 to Pro110.

Belongs to the CIDE family. In terms of assembly, interacts with DFFA. Interacts with DFFB; inhibited by DFFB. Interacts with APOB. Interacts with PREB/SEC12; facilitating loading of SCAP-SREBP into COPII vesicles.

The protein localises to the lipid droplet. The protein resides in the endoplasmic reticulum membrane. It localises to the golgi apparatus. Its subcellular location is the cytoplasmic vesicle. It is found in the COPI-coated vesicle. Its function is as follows. Lipid transferase specifically expressed in hepatocytes, which promotes unilocular lipid droplet formation by mediating lipid droplet fusion. Lipid droplet fusion promotes their enlargement, restricting lipolysis and favoring lipid storage. Localizes on the lipid droplet surface, at focal contact sites between lipid droplets, and mediates atypical lipid droplet fusion by promoting directional net neutral lipid transfer from the smaller to larger lipid droplets. The transfer direction may be driven by the internal pressure difference between the contacting lipid droplet pair. Promotes lipid exchange and lipid droplet fusion in both small and large lipid droplet-containing hepatocytes. In addition to its role in lipid droplet fusion, also involved in cytoplasmic vesicle biogenesis and transport. Required for very-low-density lipoprotein (VLDL) lipidation and maturation. Probably involved in the biogenesis of VLDL transport vesicles by forming a COPII vesicle coat and facilitating the formation of endoplasmic reticulum-derived large vesicles. Also involved in sterol-regulated export of the SCAP-SREBP complex, composed of SCAP, SREBF1/SREBP1 and SREBF2/SREBP2, by promoting loading of SCAP-SREBP into COPII vesicles. May also activate apoptosis. This is Lipid transferase CIDEB (CIDEB) from Bos taurus (Bovine).